The primary structure comprises 25 residues: MESIEQRVKKIVAEQLGVAEAEIKA.

In terms of domain architecture, Carrier spans 2 to 25 (ESIEQRVKKIVAEQLGVAEAEIKA).

This sequence belongs to the acyl carrier protein (ACP) family. Post-translationally, 4'-phosphopantetheine is transferred from CoA to a specific serine of apo-ACP by AcpS. This modification is essential for activity because fatty acids are bound in thioester linkage to the sulfhydryl of the prosthetic group.

Its subcellular location is the cytoplasm. The protein operates within lipid metabolism; fatty acid biosynthesis. Carrier of the growing fatty acid chain in fatty acid biosynthesis. This is Acyl carrier protein (acpP) from Alcaligenes faecalis.